Reading from the N-terminus, the 526-residue chain is Phosphoenolpyruvate carboxykinase (ATP) 2 (526 aa).

Substrate contacts are provided by Arg55, Tyr190, and Lys196. ATP-binding positions include Lys196, His215, and 231–239; that span reads GLSGTGKTT. Lys196 and His215 together coordinate Mn(2+). Mn(2+) is bound at residue Asp252. ATP contacts are provided by Glu280, Arg317, and Thr442. Arg317 lines the substrate pocket.

The protein belongs to the phosphoenolpyruvate carboxykinase (ATP) family. Mn(2+) serves as cofactor.

The protein localises to the cytoplasm. It catalyses the reaction oxaloacetate + ATP = phosphoenolpyruvate + ADP + CO2. It participates in carbohydrate biosynthesis; gluconeogenesis. Its function is as follows. Involved in the gluconeogenesis. Catalyzes the conversion of oxaloacetate (OAA) to phosphoenolpyruvate (PEP) through direct phosphoryl transfer between the nucleoside triphosphate and OAA. The protein is Phosphoenolpyruvate carboxykinase (ATP) 2 of Moorella thermoacetica (strain ATCC 39073 / JCM 9320).